A 383-amino-acid polypeptide reads, in one-letter code: Putative F-box protein At4g09190 (383 aa).

An F-box domain is found at 16 to 67; the sequence is RSQREHIPLDLIVEIVSSLPAKSIVRFRSVSKLWSSIITTPDFTSSVVTRSL.

The protein is Putative F-box protein At4g09190 of Arabidopsis thaliana (Mouse-ear cress).